The chain runs to 130 residues: Small ribosomal subunit protein uS11c (130 aa).

It belongs to the universal ribosomal protein uS11 family. In terms of assembly, part of the 30S ribosomal subunit.

It is found in the plastid. Its subcellular location is the chloroplast. The polypeptide is Small ribosomal subunit protein uS11c (Oedogonium cardiacum (Filamentous green alga)).